The primary structure comprises 637 residues: Chaperone protein HtpG (637 aa).

Residues 1–345 (MSQQETHGFQ…SNDLPLNVSR (345 aa)) form an a; substrate-binding region. Residues 346–562 (EILQDNHITK…EGEMSTQMIK (217 aa)) form a b region. The interval 563–637 (LMQAAGQPVP…MNQMLLANMK (75 aa)) is c.

The protein belongs to the heat shock protein 90 family. Homodimer.

The protein localises to the cytoplasm. Its function is as follows. Molecular chaperone. Has ATPase activity. The sequence is that of Chaperone protein HtpG from Shewanella sp. (strain W3-18-1).